A 434-amino-acid chain; its full sequence is Prenyltransferase penG (434 aa).

Composition is skewed to polar residues over residues 1-14 (MTQD…QTAG) and 21-35 (THSN…PSTW). Residues 1–35 (MTQDVVTVSSQTAGTIKESGTHSNPDNKTTSPSTW) form a disordered region. Residues 104-105 (EI) and Glu-108 contribute to the L-tryptophan site. Substrate contacts are provided by Arg-122, Lys-208, Arg-275, Lys-277, Tyr-279, and Tyr-348.

Belongs to the tryptophan dimethylallyltransferase family.

It catalyses the reaction yaequinolone E + dimethylallyl diphosphate + H2O = [(1'E)-3'-hydroxy-3',7'-dimethylocta-1',6'-dien-1'-yl]-quinolinone B + diphosphate. It participates in secondary metabolite biosynthesis. The protein operates within alkaloid biosynthesis. It functions in the pathway mycotoxin biosynthesis. Its function is as follows. Prenyltransferase; part of the gene cluster that mediates the biosynthesis of penigequinolones, potent insecticidal alkaloids that contain a highly modified 10-carbon prenyl group. The first stage is catalyzed by the nonribosomal peptide synthetase penN that condenses anthranilic acid and O-methyl-L-tyrosine to produce 4'-methoxycyclopeptin. 4'-methoxycyclopeptin is then converted to 4'-methoxydehydrocyclopeptin by the ketoglutarate-dependent dioxygenase penM through dehydrogenation to form a double bond between C-alpha and C-beta of the O-methyltyrosine side chain. PenM also converts its first product methoxydehydrocyclopeptin to 4'-methoxycyclopenin. The following conversion of 4'methoxycyclopenin into 4'-methoxyviridicatin is catalyzed by the cyclopenase penL. 4'-methoxyviridicatin is the precursor of quinolone natural products, and is further converted to quinolinone B. The prenyltransferase penI then catalyzes the canonical Friedel-Crafts alkylation of quinolinone B with dimethylallyl cation to yield dimethylallyl quinolone, which is subjected to FAD-dependent dehydrogenation by the FAD-linked oxidoreductase penH to yield conjugated aryl diene. The delta(3') double bond then serves as the site of the second alkylation with DMAPP catalyzed by the prenyltransferase penG to yield a carbenium ion intermediate, which can be attacked by H(2)O to yield a styrenyl quinolone containing a C3'-hydroxyprenyl chain, or undergo cyclization to yield yaequinolones J1 and J2. The conversion of the styrenyl quinolone into the tetrahydrofuran-containing yaequinolone C is performed by the FAD-dependent monooxygenase penE and involves epoxidation of the terminal C7'-C8' olefin, followed by epoxide ring opening initiated by the C3' hydroxyl group. The predicted cysteine hydrolase penJ acts as an epoxide hydrolase that enhances the rate of the 5-exo-tet cyclization step, increasing the yield of yaequinolone C. PenF catalyzes the cationic rearrangement of the epoxide formed by penE (before ring opening to produce yaequinolone C) into yaequinolone D. Finally, the short-chain dehydrogenase/reductase (SDR)-like reductase penD, catalyzes both the dehydration of yaequinolone D and the reduction of the resulting oxonium to yield penigequinolone. The polypeptide is Prenyltransferase penG (Penicillium thymicola).